The sequence spans 158 residues: NADH-quinone oxidoreductase subunit B 2 (158 aa).

[4Fe-4S] cluster contacts are provided by C37, C38, C102, and C132.

Belongs to the complex I 20 kDa subunit family. NDH-1 is composed of 14 different subunits. Subunits NuoB, C, D, E, F, and G constitute the peripheral sector of the complex. [4Fe-4S] cluster is required as a cofactor.

It localises to the cell inner membrane. It carries out the reaction a quinone + NADH + 5 H(+)(in) = a quinol + NAD(+) + 4 H(+)(out). NDH-1 shuttles electrons from NADH, via FMN and iron-sulfur (Fe-S) centers, to quinones in the respiratory chain. Couples the redox reaction to proton translocation (for every two electrons transferred, four hydrogen ions are translocated across the cytoplasmic membrane), and thus conserves the redox energy in a proton gradient. In Nitrosospira multiformis (strain ATCC 25196 / NCIMB 11849 / C 71), this protein is NADH-quinone oxidoreductase subunit B 2.